The primary structure comprises 348 residues: Dihydroorotase (348 aa).

Residues His-17 and His-19 each coordinate Zn(2+). Residues 19-21 and Asn-45 contribute to the substrate site; that span reads HLR. The Zn(2+) site is built by Lys-103, His-140, and His-178. Lys-103 carries the post-translational modification N6-carboxylysine. His-140 is a substrate binding site. Leu-223 lines the substrate pocket. Asp-251 contributes to the Zn(2+) binding site. Residue Asp-251 is part of the active site. The substrate site is built by His-255 and Ala-267.

Belongs to the metallo-dependent hydrolases superfamily. DHOase family. Class II DHOase subfamily. As to quaternary structure, homodimer. It depends on Zn(2+) as a cofactor.

It carries out the reaction (S)-dihydroorotate + H2O = N-carbamoyl-L-aspartate + H(+). The protein operates within pyrimidine metabolism; UMP biosynthesis via de novo pathway; (S)-dihydroorotate from bicarbonate: step 3/3. Catalyzes the reversible cyclization of carbamoyl aspartate to dihydroorotate. This chain is Dihydroorotase, found in Cronobacter sakazakii (strain ATCC BAA-894) (Enterobacter sakazakii).